A 292-amino-acid polypeptide reads, in one-letter code: Putative phosphatase MPN_381 (292 aa).

Aspartate 11 functions as the Nucleophile in the catalytic mechanism. Aspartate 11 serves as a coordination point for Mg(2+). Leucine 12 contributes to the phosphate binding site. Aspartate 13 lines the Mg(2+) pocket. Residues 60–61 and lysine 217 each bind phosphate; that span reads TG. Aspartate 242 serves as a coordination point for Mg(2+). Asparagine 245 serves as a coordination point for phosphate.

Belongs to the HAD-like hydrolase superfamily. Cof family. Mg(2+) serves as cofactor.

This is Putative phosphatase MPN_381 from Mycoplasma pneumoniae (strain ATCC 29342 / M129 / Subtype 1) (Mycoplasmoides pneumoniae).